A 75-amino-acid chain; its full sequence is Small ribosomal subunit protein bS18 (75 aa).

Belongs to the bacterial ribosomal protein bS18 family. Part of the 30S ribosomal subunit. Forms a tight heterodimer with protein bS6.

Functionally, binds as a heterodimer with protein bS6 to the central domain of the 16S rRNA, where it helps stabilize the platform of the 30S subunit. This is Small ribosomal subunit protein bS18 from Moorella thermoacetica (strain ATCC 39073 / JCM 9320).